We begin with the raw amino-acid sequence, 384 residues long: Bifunctional enzyme IspD/IspF (384 aa).

2-C-methyl-D-erythritol 4-phosphate cytidylyltransferase regions lie at residues 1 to 227 and 1 to 228; these read MAKV…EGEQ and MAKV…GEQR. Residues 228 to 384 are 2-C-methyl-D-erythritol 2,4-cyclodiphosphate synthase; the sequence is RIGSGFDVHR…QATALITLPF (157 aa). Asp-234 and His-236 together coordinate a divalent metal cation. Residues 234-236 and 260-261 contribute to the 4-CDP-2-C-methyl-D-erythritol 2-phosphate site; these read DVH and HS. His-268 provides a ligand contact to a divalent metal cation. 4-CDP-2-C-methyl-D-erythritol 2-phosphate is bound by residues 282–284, 358–361, Phe-365, and Arg-368; these read DIG and TTTE.

It in the N-terminal section; belongs to the IspD/TarI cytidylyltransferase family. IspD subfamily. This sequence in the C-terminal section; belongs to the IspF family. Requires a divalent metal cation as cofactor.

It carries out the reaction 2-C-methyl-D-erythritol 4-phosphate + CTP + H(+) = 4-CDP-2-C-methyl-D-erythritol + diphosphate. It catalyses the reaction 4-CDP-2-C-methyl-D-erythritol 2-phosphate = 2-C-methyl-D-erythritol 2,4-cyclic diphosphate + CMP. It functions in the pathway isoprenoid biosynthesis; isopentenyl diphosphate biosynthesis via DXP pathway; isopentenyl diphosphate from 1-deoxy-D-xylulose 5-phosphate: step 2/6. Its pathway is isoprenoid biosynthesis; isopentenyl diphosphate biosynthesis via DXP pathway; isopentenyl diphosphate from 1-deoxy-D-xylulose 5-phosphate: step 4/6. In terms of biological role, bifunctional enzyme that catalyzes the formation of 4-diphosphocytidyl-2-C-methyl-D-erythritol from CTP and 2-C-methyl-D-erythritol 4-phosphate (MEP) (IspD), and catalyzes the conversion of 4-diphosphocytidyl-2-C-methyl-D-erythritol 2-phosphate (CDP-ME2P) to 2-C-methyl-D-erythritol 2,4-cyclodiphosphate (ME-CPP) with a corresponding release of cytidine 5-monophosphate (CMP) (IspF). This chain is Bifunctional enzyme IspD/IspF, found in Rhodospirillum rubrum (strain ATCC 11170 / ATH 1.1.1 / DSM 467 / LMG 4362 / NCIMB 8255 / S1).